The sequence spans 342 residues: NADPH-dependent methylglyoxal reductase GRE2 (342 aa).

NADP(+) is bound by residues 7–12 (GANGFI), Arg-32, Lys-36, 57–58 (DI), Tyr-165, Lys-169, Val-199, and Ser-216. Lys-169 serves as the catalytic Proton donor. A Phosphoserine modification is found at Ser-333.

This sequence belongs to the NAD(P)-dependent epimerase/dehydratase family. Dihydroflavonol-4-reductase subfamily. Monomer. Post-translationally, the N-terminus is blocked.

Its subcellular location is the cytoplasm. The protein resides in the nucleus. The enzyme catalyses (S)-lactaldehyde + NADP(+) = methylglyoxal + NADPH + H(+). It catalyses the reaction 3-methylbutanol + NADP(+) = 3-methylbutanal + NADPH + H(+). The catalysed reaction is 2,5-hexanedione + 2 NADPH + 2 H(+) = (2S,5S)-hexanediol + 2 NADP(+). It carries out the reaction (S)-3-chloro-1-phenyl-1-propanol + NADP(+) = 3-chloro-1-phenyl-1-propanone + NADPH + H(+). With respect to regulation, activated by glutathione. In terms of biological role, catalyzes the irreversible reduction of the cytotoxic compound methylglyoxal (MG, 2-oxopropanal) to (S)-lactaldehyde as an alternative to detoxification of MG by glyoxalase I GLO1. MG is synthesized via a bypath of glycolysis from dihydroxyacetone phosphate and is believed to play a role in cell cycle regulation and stress adaptation. Also catalyzes the reduction of 3-methylbutanal to 3-methylbutanol. Acts as a suppressor of 3-methylbutanol-induced filamentation by modulating the levels of 3-methylbutanal, the signal to which cells respond by filamentation. Also involved in ergosterol metabolism. This chain is NADPH-dependent methylglyoxal reductase GRE2 (GRE2), found in Saccharomyces cerevisiae (strain ATCC 204508 / S288c) (Baker's yeast).